The chain runs to 266 residues: Phosphatidylglycerol--prolipoprotein diacylglyceryl transferase (266 aa).

7 helical membrane-spanning segments follow: residues 10 to 30 (VAIA…LVGI), 56 to 76 (LVFW…VFFY), 92 to 112 (WEGG…TWWF), 120 to 140 (FFEL…AGRI), 172 to 192 (PSQL…LWFY), 200 to 220 (MAVS…VEFV), and 234 to 254 (WLTM…GLIA). R139 contributes to the a 1,2-diacyl-sn-glycero-3-phospho-(1'-sn-glycerol) binding site.

Belongs to the Lgt family.

The protein localises to the cell inner membrane. The catalysed reaction is L-cysteinyl-[prolipoprotein] + a 1,2-diacyl-sn-glycero-3-phospho-(1'-sn-glycerol) = an S-1,2-diacyl-sn-glyceryl-L-cysteinyl-[prolipoprotein] + sn-glycerol 1-phosphate + H(+). Its pathway is protein modification; lipoprotein biosynthesis (diacylglyceryl transfer). Its function is as follows. Catalyzes the transfer of the diacylglyceryl group from phosphatidylglycerol to the sulfhydryl group of the N-terminal cysteine of a prolipoprotein, the first step in the formation of mature lipoproteins. The protein is Phosphatidylglycerol--prolipoprotein diacylglyceryl transferase of Ectopseudomonas mendocina (strain ymp) (Pseudomonas mendocina).